The primary structure comprises 381 residues: E3 ubiquitin-protein ligase RNF13 (381 aa).

Residues 1–34 (MLLSIGMLMLSATQVYTILTVQLFAFLNLLPVEA) form the signal peptide. Over 35 to 182 (DILAYNFENA…VPELSLPLEY (148 aa)) the chain is Lumenal. The PA domain occupies 64 to 160 (LKGFLINSKP…GESSANSLKD (97 aa)). N-linked (GlcNAc...) asparagine glycosylation occurs at Asn-88. Residues 183-203 (YLIPFLIIVGICLILIVIFMI) traverse the membrane as a helical segment. The Cytoplasmic segment spans residues 204-381 (TKFVQDRHRN…EQDYNIANTV (178 aa)). The RING-type; atypical zinc finger occupies 240–282 (CAICLEEYEDGDKLRILPCSHAYHCKCVDPWLTKTKKTCPVCK). The disordered stretch occupies residues 285 to 381 (VVPSQGDSDS…EQDYNIANTV (97 aa)). The span at 317-328 (SARTQSFGSLSE) shows a compositional bias: polar residues. Acidic residues predominate over residues 339 to 357 (SDYEDDDNEETDSSDADNE). Polar residues predominate over residues 365–381 (VQLQPNGEQDYNIANTV).

In terms of assembly, interacts with ERN1. Autoubiquitinated. In terms of processing, N-glycosylated and also modified with chondroitin sulfate. Expressed in the brain, heart, kidney, liver and spleen. Higher expression in adult tissues compared to the embryonic counterparts.

The protein resides in the endoplasmic reticulum membrane. The protein localises to the late endosome membrane. Its subcellular location is the lysosome membrane. It is found in the nucleus inner membrane. It carries out the reaction S-ubiquitinyl-[E2 ubiquitin-conjugating enzyme]-L-cysteine + [acceptor protein]-L-lysine = [E2 ubiquitin-conjugating enzyme]-L-cysteine + N(6)-ubiquitinyl-[acceptor protein]-L-lysine.. Its pathway is protein modification; protein ubiquitination. Functionally, E3 ubiquitin-protein ligase that regulates cell proliferation. Involved in apoptosis regulation. Mediates ER stress-induced activation of JNK signaling pathway and apoptosis by promoting ERN1 activation and splicing of XBP1 mRNA. Also involved in protein trafficking and localization. In Mus musculus (Mouse), this protein is E3 ubiquitin-protein ligase RNF13 (Rnf13).